The sequence spans 380 residues: Succinyl-diaminopimelate desuccinylase (380 aa).

Residue histidine 68 participates in Zn(2+) binding. Aspartate 70 is an active-site residue. Aspartate 101 is a Zn(2+) binding site. The Proton acceptor role is filled by glutamate 135. The Zn(2+) site is built by glutamate 136, glutamate 164, and histidine 350.

It belongs to the peptidase M20A family. DapE subfamily. As to quaternary structure, homodimer. Requires Zn(2+) as cofactor. Co(2+) serves as cofactor.

It carries out the reaction N-succinyl-(2S,6S)-2,6-diaminopimelate + H2O = (2S,6S)-2,6-diaminopimelate + succinate. It functions in the pathway amino-acid biosynthesis; L-lysine biosynthesis via DAP pathway; LL-2,6-diaminopimelate from (S)-tetrahydrodipicolinate (succinylase route): step 3/3. Its function is as follows. Catalyzes the hydrolysis of N-succinyl-L,L-diaminopimelic acid (SDAP), forming succinate and LL-2,6-diaminopimelate (DAP), an intermediate involved in the bacterial biosynthesis of lysine and meso-diaminopimelic acid, an essential component of bacterial cell walls. In Tolumonas auensis (strain DSM 9187 / NBRC 110442 / TA 4), this protein is Succinyl-diaminopimelate desuccinylase.